A 446-amino-acid polypeptide reads, in one-letter code: Phosphoglucosamine mutase (446 aa).

Ser-101 (phosphoserine intermediate) is an active-site residue. Mg(2+)-binding residues include Ser-101, Asp-240, Asp-242, and Asp-244. Ser-101 carries the post-translational modification Phosphoserine.

The protein belongs to the phosphohexose mutase family. Mg(2+) is required as a cofactor. Post-translationally, activated by phosphorylation.

The catalysed reaction is alpha-D-glucosamine 1-phosphate = D-glucosamine 6-phosphate. Its function is as follows. Catalyzes the conversion of glucosamine-6-phosphate to glucosamine-1-phosphate. In Coxiella burnetii (strain Dugway 5J108-111), this protein is Phosphoglucosamine mutase.